Here is an 835-residue protein sequence, read N- to C-terminus: DNA primase (835 aa).

A CHC2-type zinc finger spans residues 778-817 (CLNFKHRLKTQSVRIFLSLHLTPDNCVTLTLMSQCFASKC).

It belongs to the herpesviridae DNA primase family. Associates with the helicase and the primase-associated factor to form the helicase-primase factor.

It localises to the host nucleus. Essential component of the helicase/primase complex. Unwinds the DNA at the replication forks and generates single-stranded DNA for both leading and lagging strand synthesis. The primase initiates primer synthesis and thereby produces large amount of short RNA primers on the lagging strand that the polymerase elongates using dNTPs. The protein is DNA primase (56) of Saimiri sciureus (Common squirrel monkey).